The following is a 526-amino-acid chain: Opine oxidase subunit A (526 aa).

Positions 396, 398, 431, and 436 each coordinate [2Fe-2S] cluster.

To T-protein and to dimethylglycine dehydrogenase. Heterodimer of a subunit A and a subunit B. Requires [2Fe-2S] cluster as cofactor.

It functions in the pathway opine metabolism; octopine degradation. In terms of biological role, oxidative cleavage of octopine into L-arginine and pyruvate. The protein is Opine oxidase subunit A (ooxA) of Rhizobium meliloti (Ensifer meliloti).